Reading from the N-terminus, the 700-residue chain is Beta-galactosidase BgaB (700 aa).

Residues Arg-122 and Asn-160 each coordinate substrate. Catalysis depends on Glu-161, which acts as the Proton donor. The active-site Nucleophile is Glu-320. Substrate contacts are provided by residues Trp-328 and 368 to 371 (EAFH).

This sequence belongs to the glycosyl hydrolase 42 family. In terms of assembly, trimer. Tetramer. Post-translationally, the N-terminus is blocked.

It carries out the reaction Hydrolysis of terminal non-reducing beta-D-galactose residues in beta-D-galactosides.. Its activity is regulated as follows. Inhibited by high substrate concentrations (100 mg/ml). No effect on activity with various EDTA concentrations (0-1 mM). 20-fold higher activity when cells grown on TOS than when cells grown on galactose, glucose and lactose. Involved in the hydrolysis of transgalactooligosaccharides (TOS). Highly active towards Gal(beta1-4)Gal and Gal(beta1-4)-Gal-containing oligosaccharides. Low activity towards Gal(beta1-3)Gal, lactose and Gal(beta1-3)GalOMe. No activity towards Gal(beta1-6)Gal, Gal(beta1-4)Man, Gal(alpha1-4)Gal, Gal(alpha1-3)Gal(beta1-4)Gal, lactulose, 3'fucosyllactose, lacto-N-fucopentaose I, lacto-N-fucopentaose II, cellobiose, maltose or sucrose. No transglycosylation activity is found at high substrate concentrations (100 mg/ml) and only low transglycosylation activity at lower substrate concentrations (10 mg/ml). The chain is Beta-galactosidase BgaB (bgaB) from Bifidobacterium adolescentis (strain ATCC 15703 / DSM 20083 / NCTC 11814 / E194a).